The chain runs to 177 residues: MPIKSRIRTVPDYPKKGIMFRDITTLIKDPVGFRLVIDNMTQHYLSNGVDFDAIVGIESRGFILGGALAYTLGKGFVPVRKPGKLPADVVQLEYELEYGTDKIEMHTDALVQGQRVLLVDDLLATGGTALAAAGLVEKLGGVVASMAFIVNLPDIGGEKKIREKGYNIYFLTEFEGD.

The protein belongs to the purine/pyrimidine phosphoribosyltransferase family. In terms of assembly, homodimer.

Its subcellular location is the cytoplasm. The catalysed reaction is AMP + diphosphate = 5-phospho-alpha-D-ribose 1-diphosphate + adenine. It functions in the pathway purine metabolism; AMP biosynthesis via salvage pathway; AMP from adenine: step 1/1. Catalyzes a salvage reaction resulting in the formation of AMP, that is energically less costly than de novo synthesis. This is Adenine phosphoribosyltransferase from Chlorobaculum tepidum (strain ATCC 49652 / DSM 12025 / NBRC 103806 / TLS) (Chlorobium tepidum).